A 245-amino-acid polypeptide reads, in one-letter code: tRNA (guanine-N(1)-)-methyltransferase (245 aa).

S-adenosyl-L-methionine contacts are provided by residues Gly-114 and 134–139 (IGDYIL).

This sequence belongs to the RNA methyltransferase TrmD family. Homodimer.

It is found in the cytoplasm. It carries out the reaction guanosine(37) in tRNA + S-adenosyl-L-methionine = N(1)-methylguanosine(37) in tRNA + S-adenosyl-L-homocysteine + H(+). Functionally, specifically methylates guanosine-37 in various tRNAs. In Listeria welshimeri serovar 6b (strain ATCC 35897 / DSM 20650 / CCUG 15529 / CIP 8149 / NCTC 11857 / SLCC 5334 / V8), this protein is tRNA (guanine-N(1)-)-methyltransferase.